An 88-amino-acid polypeptide reads, in one-letter code: Small ribosomal subunit protein uS17 (88 aa).

Belongs to the universal ribosomal protein uS17 family. As to quaternary structure, part of the 30S ribosomal subunit.

In terms of biological role, one of the primary rRNA binding proteins, it binds specifically to the 5'-end of 16S ribosomal RNA. In Pseudomonas entomophila (strain L48), this protein is Small ribosomal subunit protein uS17.